We begin with the raw amino-acid sequence, 172 residues long: 3-hydroxydecanoyl-[acyl-carrier-protein] dehydratase (172 aa).

His71 is a catalytic residue.

The protein belongs to the thioester dehydratase family. FabA subfamily. Homodimer.

The protein localises to the cytoplasm. It catalyses the reaction a (3R)-hydroxyacyl-[ACP] = a (2E)-enoyl-[ACP] + H2O. The catalysed reaction is (3R)-hydroxydecanoyl-[ACP] = (2E)-decenoyl-[ACP] + H2O. The enzyme catalyses (2E)-decenoyl-[ACP] = (3Z)-decenoyl-[ACP]. It functions in the pathway lipid metabolism; fatty acid biosynthesis. Its function is as follows. Necessary for the introduction of cis unsaturation into fatty acids. Catalyzes the dehydration of (3R)-3-hydroxydecanoyl-ACP to E-(2)-decenoyl-ACP and then its isomerization to Z-(3)-decenoyl-ACP. Can catalyze the dehydratase reaction for beta-hydroxyacyl-ACPs with saturated chain lengths up to 16:0, being most active on intermediate chain length. This is 3-hydroxydecanoyl-[acyl-carrier-protein] dehydratase from Aliivibrio salmonicida (strain LFI1238) (Vibrio salmonicida (strain LFI1238)).